We begin with the raw amino-acid sequence, 352 residues long: Outer membrane protein assembly factor BamC (352 aa).

The signal sequence occupies residues 1–19 (MQYWIPKALAVSVLVSLSG). Residue Cys20 is the site of N-palmitoyl cysteine attachment. The S-diacylglycerol cysteine moiety is linked to residue Cys20.

Belongs to the BamC family. As to quaternary structure, part of the Bam complex.

The protein localises to the cell outer membrane. Its function is as follows. Part of the outer membrane protein assembly complex, which is involved in assembly and insertion of beta-barrel proteins into the outer membrane. The sequence is that of Outer membrane protein assembly factor BamC from Pseudoalteromonas sp. (strain SM9913).